A 183-amino-acid chain; its full sequence is Ribosome maturation factor RimP (183 aa).

This sequence belongs to the RimP family.

It localises to the cytoplasm. Required for maturation of 30S ribosomal subunits. The polypeptide is Ribosome maturation factor RimP (Leptothrix cholodnii (strain ATCC 51168 / LMG 8142 / SP-6) (Leptothrix discophora (strain SP-6))).